A 252-amino-acid chain; its full sequence is 7-cyano-7-deazaguanine synthase (252 aa).

Position 22–32 (22–32 (FSGGQDSTTCL)) interacts with ATP. Residues Cys-215, Cys-230, Cys-233, and Cys-236 each contribute to the Zn(2+) site.

It belongs to the QueC family. Zn(2+) serves as cofactor.

The catalysed reaction is 7-carboxy-7-deazaguanine + NH4(+) + ATP = 7-cyano-7-deazaguanine + ADP + phosphate + H2O + H(+). Its pathway is purine metabolism; 7-cyano-7-deazaguanine biosynthesis. Functionally, catalyzes the ATP-dependent conversion of 7-carboxy-7-deazaguanine (CDG) to 7-cyano-7-deazaguanine (preQ(0)). The chain is 7-cyano-7-deazaguanine synthase from Granulibacter bethesdensis (strain ATCC BAA-1260 / CGDNIH1).